The following is a 147-amino-acid chain: Sentan (147 aa).

The segment at 14–34 is disordered; the sequence is RLEGEPNPPAAPTSTLAPKNM. The segment covering 25–34 has biased composition (polar residues); the sequence is PTSTLAPKNM.

Belongs to the S-100 family.

The protein localises to the cell projection. Its subcellular location is the cilium. Functionally, may be a component of the linker structure that bridges the ciliary membrane and peripheral singlet microtubules. The chain is Sentan (SNTN) from Bos taurus (Bovine).